Here is a 168-residue protein sequence, read N- to C-terminus: Urease accessory protein UreE (168 aa).

A disordered region spans residues 137 to 168 (PESGAYHGTTGHGGGHSHSHGHSHDHHHDHSH). Positions 151-161 (GHSHSHGHSHD) are enriched in basic residues.

The protein belongs to the UreE family.

The protein localises to the cytoplasm. Its function is as follows. Involved in urease metallocenter assembly. Binds nickel. Probably functions as a nickel donor during metallocenter assembly. This chain is Urease accessory protein UreE, found in Saccharophagus degradans (strain 2-40 / ATCC 43961 / DSM 17024).